The sequence spans 323 residues: Calcium homeostasis modulator protein 2 (323 aa).

Over 1–21 (MAALIAENFRFLSLFFKSKDV) the chain is Cytoplasmic. The central pore stretch occupies residues 14–39 (LFFKSKDVMIFNGLVALGTVGSQELF). The helical transmembrane segment at 22–43 (MIFNGLVALGTVGSQELFSVVA) threads the bilayer. Over 44–52 (FHCPCSPAR) the chain is Extracellular. Disulfide bonds link C46-C130 and C48-C162. A helical membrane pass occupies residues 53 to 76 (NYLYGLTAIGVPALALFLIGVILN). The Cytoplasmic portion of the chain corresponds to 77–101 (NHTWNLVAECQYRRAKNCSAAPTFL). A helical transmembrane segment spans residues 102-132 (LLSSILGRAAVAPVTWSVISLLRGEAYVCAL). The Extracellular segment spans residues 133–179 (SEFVDPSSLTAGDEGFPPDHATEILARFPCGEGPANLSGFREEVSRR). The segment at 145–152 (DEGFPPDH) is hemichannel docking. A helical membrane pass occupies residues 180–206 (LKYESQLFGWLLIGVVAILVFLTKCFK). The Cytoplasmic portion of the chain corresponds to 207 to 323 (HYCSPLSYRQ…DNVEMALLTV (117 aa)). The tract at residues 214 to 251 (YRQEAYWAQYRTNEDQLFQRTAEVHSRVLAANNVRRFF) is intersubunit interaction.

Belongs to the CALHM family. As to quaternary structure, homo-undecamer. Two undecameric hemichannels can assemble in a head-to-head manner to form a gap junction.

The protein localises to the cell membrane. The enzyme catalyses ATP(in) = ATP(out). In terms of biological role, pore-forming subunit of Ca(2+) homeostasis modulator channels. Mediates ATP release from astrocytes and ATP-induced Ca(2+) influx in microglia thus regulating neuronal ATP and Ca(2+) homeostasis, synaptic transmission and neuroinflammatory response. May form intercellular gap junctions. The gating mechanism remains unknown. This chain is Calcium homeostasis modulator protein 2 (Calhm2), found in Rattus norvegicus (Rat).